Here is a 527-residue protein sequence, read N- to C-terminus: Matrix metalloproteinase-19 (527 aa).

The signal sequence occupies residues 1-18 (MDWQQLWLAFLLPMTVSG). The propeptide occupies 19-98 (RALGPTEKEA…EDPFNQKSLK (80 aa)). The short motif at 84–91 (PRCGLEDP) is the Cysteine switch element. Cys86 is a Zn(2+) binding site. N-linked (GlcNAc...) asparagine glycosylation occurs at Asn109. His213 serves as a coordination point for Zn(2+). Glu214 is an active-site residue. Residues His217 and His223 each contribute to the Zn(2+) site. Hemopexin repeat units follow at residues 286–333 (PNPC…WEGL), 334–372 (PGNL…FPMK), 377–425 (EPNL…FTGV), and 426–471 (PDRP…WMHC). Cys289 and Cys471 are disulfide-bonded. Asn464 and Asn479 each carry an N-linked (GlcNAc...) asparagine glycan. The tract at residues 473-500 (SQTPDTNSSTGDVTPSTTDTVLGTTPST) is disordered. Asp512 carries the GPI-anchor amidated aspartate lipid modification. Positions 513 to 527 (SASLSFSANVTLLGA) are cleaved as a propeptide — removed in mature form. Asn521 carries N-linked (GlcNAc...) asparagine glycosylation.

Belongs to the peptidase M10A family. The cofactor is Zn(2+). Ca(2+) serves as cofactor. In terms of processing, activated by autolytic cleavage after Lys-98. Post-translationally, tyrosine phosphorylated by PKDCC/VLK. In terms of tissue distribution, highly expressed in the liver. Expressed in the arterial tunica media of large blood vessels.

The protein localises to the cell membrane. It localises to the secreted. Its subcellular location is the extracellular space. The protein resides in the extracellular matrix. Functionally, endopeptidase that degrades various components of the extracellular matrix, such as aggrecan and cartilage oligomeric matrix protein (comp), during development, haemostasis and pathological conditions (arthritic disease). May also play a role in neovascularization or angiogenesis. Hydrolyzes collagen type IV, laminin, nidogen, nascin-C isoform, fibronectin, and type I gelatin. This is Matrix metalloproteinase-19 (Mmp19) from Mus musculus (Mouse).